The chain runs to 392 residues: O-phospho-L-seryl-tRNA:Cys-tRNA synthase 1 (392 aa).

Pyridoxal 5'-phosphate contacts are provided by residues 85-86 (AR), Asn-190, and 213-215 (SGH). N6-(pyridoxal phosphate)lysine is present on Lys-216.

This sequence belongs to the SepCysS family. Homodimer. Interacts with SepRS. The cofactor is pyridoxal 5'-phosphate.

The enzyme catalyses O-phospho-L-seryl-tRNA(Cys) + hydrogen sulfide + H(+) = L-cysteinyl-tRNA(Cys) + phosphate. In terms of biological role, converts O-phospho-L-seryl-tRNA(Cys) (Sep-tRNA(Cys)) to L-cysteinyl-tRNA(Cys) (Cys-tRNA(Cys)). This chain is O-phospho-L-seryl-tRNA:Cys-tRNA synthase 1, found in Methanocorpusculum labreanum (strain ATCC 43576 / DSM 4855 / Z).